We begin with the raw amino-acid sequence, 436 residues long: D-amino acid dehydrogenase (436 aa).

3–17 (IVVLGAGVVGVTSAY) contacts FAD.

It belongs to the DadA oxidoreductase family. It depends on FAD as a cofactor.

It carries out the reaction a D-alpha-amino acid + A + H2O = a 2-oxocarboxylate + AH2 + NH4(+). Its pathway is amino-acid degradation; D-alanine degradation; NH(3) and pyruvate from D-alanine: step 1/1. In terms of biological role, oxidative deamination of D-amino acids. The sequence is that of D-amino acid dehydrogenase from Cereibacter sphaeroides (strain ATCC 17023 / DSM 158 / JCM 6121 / CCUG 31486 / LMG 2827 / NBRC 12203 / NCIMB 8253 / ATH 2.4.1.) (Rhodobacter sphaeroides).